A 312-amino-acid polypeptide reads, in one-letter code: Olfactory receptor 8G50 (312 aa).

Over Met1–Phe28 the chain is Extracellular. Residue Asn5 is glycosylated (N-linked (GlcNAc...) asparagine). The helical transmembrane segment at Leu29 to Ile49 threads the bilayer. Residues Leu50–His56 are Cytoplasmic-facing. The chain crosses the membrane as a helical span at residues Thr57–Ile77. Residues Thr78–Thr99 are Extracellular-facing. A disulfide bridge connects residues Cys97 and Cys189. Residues Gln100 to Tyr120 traverse the membrane as a helical segment. Residues Asp121–Trp143 lie on the Cytoplasmic side of the membrane. Residues Met144–Leu164 form a helical membrane-spanning segment. Residues Arg165–Ala204 are Extracellular-facing. The chain crosses the membrane as a helical span at residues Phe205–Ile225. Residues Leu226–His244 are Cytoplasmic-facing. The chain crosses the membrane as a helical span at residues Phe245–Val265. The Extracellular segment spans residues Ser266–Ser274. A helical membrane pass occupies residues Ser275–Leu292. The Cytoplasmic segment spans residues Arg293–Val312.

Belongs to the G-protein coupled receptor 1 family.

Its subcellular location is the cell membrane. In terms of biological role, odorant receptor. The chain is Olfactory receptor 8G50 from Mus musculus (Mouse).